The sequence spans 142 residues: Large ribosomal subunit protein uL13 (142 aa).

This sequence belongs to the universal ribosomal protein uL13 family. In terms of assembly, part of the 50S ribosomal subunit.

This protein is one of the early assembly proteins of the 50S ribosomal subunit, although it is not seen to bind rRNA by itself. It is important during the early stages of 50S assembly. This is Large ribosomal subunit protein uL13 from Psychrobacter sp. (strain PRwf-1).